We begin with the raw amino-acid sequence, 267 residues long: Dihydropteroate synthase (267 aa).

In terms of domain architecture, Pterin-binding spans 1–251; sequence MTKTKIMGIL…NVELNAKLAK (251 aa). Mg(2+) is bound at residue Asn-11. (7,8-dihydropterin-6-yl)methyl diphosphate-binding positions include Thr-51, Asp-84, Asn-103, Asp-167, Lys-203, and 239-241; that span reads RVH.

This sequence belongs to the DHPS family. Homodimer. Mg(2+) serves as cofactor.

The catalysed reaction is (7,8-dihydropterin-6-yl)methyl diphosphate + 4-aminobenzoate = 7,8-dihydropteroate + diphosphate. It functions in the pathway cofactor biosynthesis; tetrahydrofolate biosynthesis; 7,8-dihydrofolate from 2-amino-4-hydroxy-6-hydroxymethyl-7,8-dihydropteridine diphosphate and 4-aminobenzoate: step 1/2. Functionally, catalyzes the condensation of para-aminobenzoate (pABA) with 6-hydroxymethyl-7,8-dihydropterin diphosphate (DHPt-PP) to form 7,8-dihydropteroate (H2Pte), the immediate precursor of folate derivatives. This chain is Dihydropteroate synthase (folP), found in Staphylococcus aureus (strain MRSA252).